A 120-amino-acid polypeptide reads, in one-letter code: Phosphoribosyl-AMP cyclohydrolase (120 aa).

Aspartate 75 contributes to the Mg(2+) binding site. Cysteine 76 is a binding site for Zn(2+). 2 residues coordinate Mg(2+): aspartate 77 and aspartate 79. Positions 92 and 99 each coordinate Zn(2+).

It belongs to the PRA-CH family. In terms of assembly, homodimer. Mg(2+) serves as cofactor. Requires Zn(2+) as cofactor.

The protein localises to the cytoplasm. The enzyme catalyses 1-(5-phospho-beta-D-ribosyl)-5'-AMP + H2O = 1-(5-phospho-beta-D-ribosyl)-5-[(5-phospho-beta-D-ribosylamino)methylideneamino]imidazole-4-carboxamide. The protein operates within amino-acid biosynthesis; L-histidine biosynthesis; L-histidine from 5-phospho-alpha-D-ribose 1-diphosphate: step 3/9. In terms of biological role, catalyzes the hydrolysis of the adenine ring of phosphoribosyl-AMP. This is Phosphoribosyl-AMP cyclohydrolase from Methanosarcina acetivorans (strain ATCC 35395 / DSM 2834 / JCM 12185 / C2A).